We begin with the raw amino-acid sequence, 1218 residues long: Mgp-operon protein 3 (1218 aa).

The signal sequence occupies residues 1–25 (MKSKLKLKRYLLFLPLLPLGTLSLA). 4 disordered regions span residues 109–129 (QESQ…SGSN), 213–245 (HFGS…GFKL), 262–353 (EPLD…AVVS), and 411–440 (QDAT…PALT). Positions 116-129 (NGSQSGSSDTSGSN) are enriched in low complexity. Over residues 217–231 (GQESSWNSQRSQKGL) the composition is skewed to polar residues. Residues 265–286 (DSTKEGKGKDESSWKNSEKTTA) show a composition bias toward basic and acidic residues. Residues 301–342 (AGSASSLQGNGSNSSGLKSLLRSAPVSVPPSSTSNQTLSLSN) show a composition bias toward low complexity. Positions 411 to 428 (QDATSTNLPHAAGASQTG) are enriched in polar residues. The helical transmembrane segment at 1121–1141 (VGSSVGILLILLILGLGIGIP) threads the bilayer. A compositionally biased stretch (low complexity) spans 1192–1204 (NNAAPKAPVKPAA). The interval 1192 to 1218 (NNAAPKAPVKPAAPTAPRPPVQPPKKA) is disordered. A compositionally biased stretch (pro residues) spans 1205-1218 (PTAPRPPVQPPKKA).

Its subcellular location is the cell membrane. This chain is Mgp-operon protein 3, found in Mycoplasma pneumoniae (strain ATCC 29342 / M129 / Subtype 1) (Mycoplasmoides pneumoniae).